Here is a 413-residue protein sequence, read N- to C-terminus: MAKEKEHMNLAFIGHVDHGKSTLVGHLLLQAGAIAEQQLAEGEDKFRFVMDRLSEERERGVTIDLAHAKFETDKYEFTIVDCPGHRDFVKNMITGASQADAAVLVVAVDDGVMPQTKEHVFLSRTLGINQLIVAINKMDLVNYDEEKFNALKDEVAALIKTVGYKPSDVEFIPLSAFEGDNITSKSENTPWYKGKTLVEALDDLEAPEKPVDLPLRIPIQDVYSITGVGTVPVGRVETGVLKKGENVIFEPAGVSGEVKSIEMHHEMIEQAEPGDNIGFNVRGVGKNDIRRGDVAGHLDNPPKVAKEFTAQIVVLQHPGVITVGYTPVFHCHTAQVACTFLELVQKMNPATGQVEEENPDFLKTGNAAVVKVKPTKPLVIEKIKDIPHMGRFAIRDMGQTVAAGMCIDLVPAK.

A tr-type G domain is found at Lys5–Val211. The interval Gly14–Ser21 is G1. Gly14–Ser21 provides a ligand contact to GTP. A Mg(2+)-binding site is contributed by Ser21. Residues Gly60 to Asp64 are G2. The G3 stretch occupies residues Asp81–Gly84. Residues Asp81 to His85 and Asn136 to Asp139 each bind GTP. Residues Asn136–Asp139 are G4. The tract at residues Ser175 to Phe177 is G5.

Belongs to the TRAFAC class translation factor GTPase superfamily. Classic translation factor GTPase family. EF-Tu/EF-1A subfamily.

The protein resides in the cytoplasm. The catalysed reaction is GTP + H2O = GDP + phosphate + H(+). Functionally, GTP hydrolase that promotes the GTP-dependent binding of aminoacyl-tRNA to the A-site of ribosomes during protein biosynthesis. The chain is Elongation factor 1-alpha from Methanothermobacter thermautotrophicus (strain ATCC 29096 / DSM 1053 / JCM 10044 / NBRC 100330 / Delta H) (Methanobacterium thermoautotrophicum).